The primary structure comprises 351 residues: Cardiolipin synthase (CMP-forming) (351 aa).

The segment at 74–120 (PAPQLSASHQHQAQQQQQQTKQPQQPYDPQQDQVPSTSTASSSKPAA) is disordered. The span at 76–120 (PQLSASHQHQAQQQQQQTKQPQQPYDPQQDQVPSTSTASSSKPAA) shows a compositional bias: low complexity. Transmembrane regions (helical) follow at residues 139 to 159 (PLIG…ALAV), 191 to 211 (VLIG…GWVA), 251 to 271 (AAAA…GGGG), 280 to 300 (PLLI…GYLL), and 321 to 341 (LIMG…LAYG).

Belongs to the CDP-alcohol phosphatidyltransferase class-I family. It depends on Mn(2+) as a cofactor.

The protein resides in the mitochondrion inner membrane. The enzyme catalyses a CDP-1,2-diacyl-sn-glycerol + a 1,2-diacyl-sn-glycero-3-phospho-(1'-sn-glycerol) = a cardiolipin + CMP + H(+). Functionally, catalyzes the synthesis of cardiolipin (CL) (diphosphatidylglycerol) by specifically transferring a phosphatidyl group from CDP-diacylglycerol to phosphatidylglycerol (PG). CL is a key phospholipid in mitochondrial membranes and plays important roles in maintaining the functional integrity and dynamics of mitochondria under both optimal and stress conditions. Cannot catalyze the phosphatidyl group transfer from one PG molecule to another to form CL. In Chlamydomonas reinhardtii (Chlamydomonas smithii), this protein is Cardiolipin synthase (CMP-forming).